The chain runs to 166 residues: Interferon gamma (166 aa).

A signal peptide spans 1 to 23; the sequence is MSYTTYFLAFQLCVTLCFSGSYC. Gln24 is modified (pyrrolidone carboxylic acid). Residues Asn39 and Asn106 are each glycosylated (N-linked (GlcNAc...) asparagine).

The protein belongs to the type II (or gamma) interferon family. In terms of assembly, homodimer. Interacts with IFNGR1 (via extracellular domain); this interaction promotes IFNGR1 dimerization. In terms of tissue distribution, released primarily from activated T lymphocytes.

It localises to the secreted. In terms of biological role, type II interferon produced by immune cells such as T-cells and NK cells that plays crucial roles in antimicrobial, antiviral, and antitumor responses by activating effector immune cells and enhancing antigen presentation. Primarily signals through the JAK-STAT pathway after interaction with its receptor IFNGR1 to affect gene regulation. Upon IFNG binding, IFNGR1 intracellular domain opens out to allow association of downstream signaling components JAK2, JAK1 and STAT1, leading to STAT1 activation, nuclear translocation and transcription of IFNG-regulated genes. Many of the induced genes are transcription factors such as IRF1 that are able to further drive regulation of a next wave of transcription. Plays a role in class I antigen presentation pathway by inducing a replacement of catalytic proteasome subunits with immunoproteasome subunits. In turn, increases the quantity, quality, and repertoire of peptides for class I MHC loading. Increases the efficiency of peptide generation also by inducing the expression of activator PA28 that associates with the proteasome and alters its proteolytic cleavage preference. Up-regulates as well MHC II complexes on the cell surface by promoting expression of several key molecules such as cathepsins B/CTSB, H/CTSH, and L/CTSL. Participates in the regulation of hematopoietic stem cells during development and under homeostatic conditions by affecting their development, quiescence, and differentiation. In Sus scrofa (Pig), this protein is Interferon gamma (IFNG).